We begin with the raw amino-acid sequence, 155 residues long: Basic phospholipase A2 PC9 (155 aa).

The signal sequence occupies residues 1 to 21; sequence MYPAHLLVLLAVCVSLLGASA. Positions 22-27 are excised as a propeptide; it reads ISPRPL. 7 disulfides stabilise this stretch: C38–C98, C54–C144, C56–C72, C71–C125, C78–C118, C87–C111, and C105–C116. Residues Y55, G57, and G59 each coordinate Ca(2+). H75 is a catalytic residue. D76 serves as a coordination point for Ca(2+). D119 is an active-site residue.

The protein belongs to the phospholipase A2 family. Group I subfamily. D49 sub-subfamily. It depends on Ca(2+) as a cofactor. In terms of tissue distribution, expressed by the venom gland.

It is found in the secreted. The catalysed reaction is a 1,2-diacyl-sn-glycero-3-phosphocholine + H2O = a 1-acyl-sn-glycero-3-phosphocholine + a fatty acid + H(+). Snake venom phospholipase A2 (PLA2) that inhibits neuromuscular transmission by blocking acetylcholine release from the nerve termini. PLA2 catalyzes the calcium-dependent hydrolysis of the 2-acyl groups in 3-sn-phosphoglycerides. This chain is Basic phospholipase A2 PC9, found in Laticauda colubrina (Yellow-lipped sea krait).